A 238-amino-acid polypeptide reads, in one-letter code: Probable transcriptional regulatory protein MGAS10750_Spy0264 (238 aa).

This sequence belongs to the TACO1 family. YeeN subfamily.

The protein resides in the cytoplasm. In Streptococcus pyogenes serotype M4 (strain MGAS10750), this protein is Probable transcriptional regulatory protein MGAS10750_Spy0264.